Reading from the N-terminus, the 33-residue chain is Defensin-1 (33 aa).

3 cysteine pairs are disulfide-bonded: Cys4/Cys32, Cys6/Cys21, and Cys11/Cys31.

Belongs to the alpha-defensin family.

It is found in the secreted. Has antibacterial activity against the Gram-negative bacterium E.coli and the Gram-positive bacteria L.monocytogenes and S.aureus. Has antifungal activity against C.albicans. The sequence is that of Defensin-1 from Papio hamadryas (Hamadryas baboon).